The following is a 22-amino-acid chain: FYAGLILTLVNTFPYNISPASS.

The protein resides in the secreted. It localises to the cell wall. The sequence is that of 50 kDa cell wall protein from Nicotiana tabacum (Common tobacco).